Reading from the N-terminus, the 243-residue chain is Pyridoxine 5'-phosphate synthase (243 aa).

Position 6 (Asn-6) interacts with 3-amino-2-oxopropyl phosphate. 8 to 9 (DH) provides a ligand contact to 1-deoxy-D-xylulose 5-phosphate. Residue Arg-17 coordinates 3-amino-2-oxopropyl phosphate. Residue His-42 is the Proton acceptor of the active site. 1-deoxy-D-xylulose 5-phosphate-binding residues include Arg-44 and His-49. Glu-72 (proton acceptor) is an active-site residue. Residue Thr-102 participates in 1-deoxy-D-xylulose 5-phosphate binding. The active-site Proton donor is the His-192. Residues Gly-193 and 214–215 (GH) each bind 3-amino-2-oxopropyl phosphate.

It belongs to the PNP synthase family. As to quaternary structure, homooctamer; tetramer of dimers.

The protein resides in the cytoplasm. The catalysed reaction is 3-amino-2-oxopropyl phosphate + 1-deoxy-D-xylulose 5-phosphate = pyridoxine 5'-phosphate + phosphate + 2 H2O + H(+). It functions in the pathway cofactor biosynthesis; pyridoxine 5'-phosphate biosynthesis; pyridoxine 5'-phosphate from D-erythrose 4-phosphate: step 5/5. In terms of biological role, catalyzes the complicated ring closure reaction between the two acyclic compounds 1-deoxy-D-xylulose-5-phosphate (DXP) and 3-amino-2-oxopropyl phosphate (1-amino-acetone-3-phosphate or AAP) to form pyridoxine 5'-phosphate (PNP) and inorganic phosphate. This chain is Pyridoxine 5'-phosphate synthase, found in Sulfurihydrogenibium sp. (strain YO3AOP1).